We begin with the raw amino-acid sequence, 132 residues long: Small ribosomal subunit protein uS8 (132 aa).

It belongs to the universal ribosomal protein uS8 family. In terms of assembly, part of the 30S ribosomal subunit. Contacts proteins S5 and S12.

In terms of biological role, one of the primary rRNA binding proteins, it binds directly to 16S rRNA central domain where it helps coordinate assembly of the platform of the 30S subunit. The chain is Small ribosomal subunit protein uS8 from Rhodococcus jostii (strain RHA1).